The following is a 298-amino-acid chain: Elongation factor Ts (298 aa).

Residues 78-81 (TDFV) form an involved in Mg(2+) ion dislocation from EF-Tu region.

This sequence belongs to the EF-Ts family.

It localises to the cytoplasm. Functionally, associates with the EF-Tu.GDP complex and induces the exchange of GDP to GTP. It remains bound to the aminoacyl-tRNA.EF-Tu.GTP complex up to the GTP hydrolysis stage on the ribosome. The chain is Elongation factor Ts from Mycoplasmopsis agalactiae (strain NCTC 10123 / CIP 59.7 / PG2) (Mycoplasma agalactiae).